The sequence spans 376 residues: Chaperone protein DnaJ (376 aa).

In terms of domain architecture, J spans 5–70 (DFYEVLGVGR…DKKAAYDQFG (66 aa)). The CR-type zinc-finger motif lies at 132–210 (GLSKELRIPT…CHGEGRVEKS (79 aa)). Residues cysteine 145, cysteine 148, cysteine 162, cysteine 165, cysteine 184, cysteine 187, cysteine 198, and cysteine 201 each coordinate Zn(2+). CXXCXGXG motif repeat units lie at residues 145–152 (CEPCDGSG), 162–169 (CGTCHGQG), 184–191 (CPTCHGRG), and 198–205 (CNKCHGEG).

The protein belongs to the DnaJ family. As to quaternary structure, homodimer. Zn(2+) is required as a cofactor.

The protein localises to the cytoplasm. In terms of biological role, participates actively in the response to hyperosmotic and heat shock by preventing the aggregation of stress-denatured proteins and by disaggregating proteins, also in an autonomous, DnaK-independent fashion. Unfolded proteins bind initially to DnaJ; upon interaction with the DnaJ-bound protein, DnaK hydrolyzes its bound ATP, resulting in the formation of a stable complex. GrpE releases ADP from DnaK; ATP binding to DnaK triggers the release of the substrate protein, thus completing the reaction cycle. Several rounds of ATP-dependent interactions between DnaJ, DnaK and GrpE are required for fully efficient folding. Also involved, together with DnaK and GrpE, in the DNA replication of plasmids through activation of initiation proteins. In Shewanella piezotolerans (strain WP3 / JCM 13877), this protein is Chaperone protein DnaJ.